We begin with the raw amino-acid sequence, 330 residues long: MSKLQLSIAVGNYDRMRPLIDGDVQIDGVDPVFMLQDPEEIFFRAFRTADYDICELSLSSYSVKTAAGTSPYIAVPVFPSRAFRHSSVYVRADRGINSPADLKGKRIGVPEYQLTANVWVRMFLEEEYGVKASDIQWVRGGYEDPTRIEKISLKLPEGVSLVNAPEGRTISNLLADGEIDGVIGPRAPSCFDRGHPQVKYLFEDPQKAAAEWYERRKLFPIMHTLGVRKTLAEQHPWLPGALVKAFEHSKAVALTRLSDTSATKVTLPFIEDQLRNARRLMGQDFWSYGFAENAHVVDRFLARDHAEGLSSRRLQPAELFHPASLESFKI.

This sequence to P.putida DHP decarboxylase.

The catalysed reaction is 4,5-dihydroxyphthalate + H(+) = 3,4-dihydroxybenzoate + CO2. It participates in xenobiotic degradation; phthalate degradation; 3,4-dihydroxybenzoate from phthalate: step 3/3. This Comamonas testosteroni (Pseudomonas testosteroni) protein is 4,5-dihydroxyphthalate decarboxylase (phtD).